The chain runs to 423 residues: COP9 signalosome complex subunit 3 (423 aa).

A2 is subject to N-acetylalanine. Residues 197-365 form the PCI domain; that stretch reads NFERALYFYE…GMVSFHDNPE (169 aa). Residues 402–423 are disordered; the sequence is QFVQKSMGSQEDDSGNKPSSYS. Phosphoserine occurs at positions 407, 410, and 423.

It belongs to the CSN3 family. In terms of assembly, component of the CSN complex, composed of COPS1/GPS1, COPS2, COPS3, COPS4, COPS5, COPS6, COPS7 (COPS7A or COPS7B), COPS8 and COPS9. In the complex, it probably interacts directly with COPS1, COPS4, COPS8 and COPS9. Interacts with CK2 and PKD. Interacts with the translation initiation factor EIF3S6 and IKBKG. Interacts with ERCC6.

Its subcellular location is the cytoplasm. The protein localises to the nucleus. In terms of biological role, component of the COP9 signalosome complex (CSN), a complex involved in various cellular and developmental processes. The CSN complex is an essential regulator of the ubiquitin (Ubl) conjugation pathway by mediating the deneddylation of the cullin subunits of SCF-type E3 ligase complexes, leading to decrease the Ubl ligase activity of SCF-type complexes such as SCF, CSA or DDB2. The complex is also involved in phosphorylation of p53/TP53, c-jun/JUN, IkappaBalpha/NFKBIA, ITPK1 and IRF8/ICSBP, possibly via its association with CK2 and PKD kinases. CSN-dependent phosphorylation of TP53 and JUN promotes and protects degradation by the Ubl system, respectively. Essential to maintain the survival of epiblast cells and thus the development of the postimplantation embryo. This Bos taurus (Bovine) protein is COP9 signalosome complex subunit 3 (COPS3).